Here is a 43-residue protein sequence, read N- to C-terminus: Photosystem I reaction center subunit IX (43 aa).

Residues 7–27 (YLSVAPVLSTLWFGSLAGLLI) form a helical membrane-spanning segment.

It belongs to the PsaJ family.

The protein localises to the plastid. Its subcellular location is the chloroplast thylakoid membrane. May help in the organization of the PsaE and PsaF subunits. This chain is Photosystem I reaction center subunit IX, found in Aethionema cordifolium (Lebanon stonecress).